The following is a 1197-amino-acid chain: Envelopment polyprotein (1197 aa).

Residues 1-16 (MYVLLTILTSVLVCEA) form the signal peptide. The Cytoplasmic segment spans residues 17-130 (IIRVSLSSTR…RDAKQIGRKT (114 aa)). The tract at residues 131 to 153 (MAGIAMTVLPALAVFALAPVVFA) is internal signal sequence for glycoprotein N. Residues 154–582 (EDPHLRNRPG…GLINYQCHTA (429 aa)) lie on the Lumenal side of the membrane. 12 disulfide bridges follow: Cys-179-Cys-188, Cys-229-Cys-239, Cys-250-Cys-281, Cys-271-Cys-284, Cys-304-Cys-456, Cys-322-Cys-332, Cys-374-Cys-434, Cys-402-Cys-413, Cys-420-Cys-425, Cys-479-Cys-482, Cys-486-Cys-556, and Cys-506-Cys-511. Residues 583 to 603 (LSAFVVVFVFSSIAIICLAIL) traverse the membrane as a helical segment. The Cytoplasmic segment spans residues 604–673 (YRVLKCLKIA…APIPRHAPIP (70 aa)). The segment at 608–650 (KCLKIAPRKVLNPLMWITAFIRWIYKKMVARVADNINQVNREI) is golgi retention signal. The segment at 646–650 (VNREI) is important for correct targeting of the glycoproteins to the Golgi complex but not for heterodimerization. An internal signal sequence for glycoprotein C region spans residues 675 to 690 (YSTYLMLLLIVSYASA). Disulfide bonds link Cys-691-Cys-731, Cys-704-Cys-713, Cys-756-Cys-852, Cys-771-Cys-965, Cys-777-Cys-825, Cys-783-Cys-832, Cys-788-Cys-814, Cys-818-Cys-823, Cys-934-Cys-947, Cys-1029-Cys-1101, Cys-1039-Cys-1042, and Cys-1049-Cys-1083. The Lumenal segment spans residues 691 to 1159 (CSELIQASSR…MSWFGGPLKT (469 aa)). A fusion loop region spans residues 777 to 783 (CHLVGEC). Asn-794 carries N-linked (GlcNAc...) asparagine; by host glycosylation. The fusion loop stretch occupies residues 819 to 830 (GGWGCGCFNVNP). The N-linked (GlcNAc...) asparagine; by host glycan is linked to Asn-1035. Residue Asn-1077 is glycosylated (N-linked (GlcNAc...) asparagine; by host). Residues 1160 to 1180 (ILLICLYVALSIGLFFLLIYL) form a helical membrane-spanning segment. At 1181-1197 (GGTGLSKMWLAATKKAS) the chain is on the cytoplasmic side.

The protein belongs to the phlebovirus envelope glycoprotein family. As to quaternary structure, heterodimer with glycoprotein C. Homotrimer (postfusion). Interacts with nucleocapsid protein N and with the polymerase L in order to package them into virus particles. Interacts with host E3 ubiquitin-protein ligase UBR4; this interaction is important for viral RNA production. Interacts with host LRP1; this interaction facilitates virus entry into the host cell. In terms of assembly, heterodimer with glycoprotein C. In terms of processing, specific enzymatic cleavages in vivo yield mature proteins including NSm protein, Glycoprotein C, and Glycoprotein N. Glycosylated. The glycans can attach to host CD209/DC-SIGN, and may play a role in virus entry into dendritic cells. Post-translationally, palmitoylated.

It is found in the virion membrane. Its subcellular location is the host Golgi apparatus membrane. It localises to the host endoplasmic reticulum membrane. The protein localises to the host mitochondrion outer membrane. The protein resides in the host Golgi apparatus. It is found in the virion. Functionally, structural component of the virion that interacts with glycoprotein C. It shields the hydrophobic fusion loops of the glycoprotein C, preventing premature fusion. The glycoprotein protrusions are arranged on an icosahedral lattice, with T=12 triangulation. They are able to attach the virion to the host cell receptor CD209/DC-SIGN and to promote fusion of membranes with the late endosome after endocytosis of the virion. Plays a role in the packaging of ribonucleoproteins and polymerase during virus assembly. In terms of biological role, structural component of the virion that interacts with glycoprotein N. Acts as a class II fusion protein that is activated upon acidification and subsequent repositioning of the glycoprotein N. The glycoprotein protrusions are arranged on an icosahedral lattice, with T=12 triangulation. They are able to attach the virion to the host cell receptor CD209/DC-SIGN and to promote fusion of membranes with the late endosome after endocytosis of the virion. Plays a role in the inhibition of virus-induced apoptosis. Plays a role for virus dissemination in vertebrates. Its function is as follows. Plays a role for virus dissemination in mosquitoes. May act as a structural virion protein in insects. This Rift valley fever virus (strain ZH-548 M12) (RVFV) protein is Envelopment polyprotein (GP).